The sequence spans 109 residues: T cell receptor alpha variable 26-1 (109 aa).

An N-terminal signal peptide occupies residues 1-19; it reads MRLVARVTVFLTFGTIIDA. The Ig-like domain maps to 20 to 109; sequence KTTQPTSMDC…TAVYYCIVRV (90 aa). A disulfide bond links Cys39 and Cys105. Residues Asn40 and Asn71 are each glycosylated (N-linked (GlcNAc...) asparagine).

As to quaternary structure, alpha-beta TR is a heterodimer composed of an alpha and beta chain; disulfide-linked. The alpha-beta TR is associated with the transmembrane signaling CD3 coreceptor proteins to form the TR-CD3 (TcR or TCR). The assembly of alpha-beta TR heterodimers with CD3 occurs in the endoplasmic reticulum where a single alpha-beta TR heterodimer associates with one CD3D-CD3E heterodimer, one CD3G-CD3E heterodimer and one CD247 homodimer forming a stable octameric structure. CD3D-CD3E and CD3G-CD3E heterodimers preferentially associate with TR alpha and TR beta chains, respectively. The association of the CD247 homodimer is the last step of TcR assembly in the endoplasmic reticulum and is required for transport to the cell surface.

It is found in the cell membrane. Functionally, v region of the variable domain of T cell receptor (TR) alpha chain that participates in the antigen recognition. Alpha-beta T cell receptors are antigen specific receptors which are essential to the immune response and are present on the cell surface of T lymphocytes. Recognize peptide-major histocompatibility (MH) (pMH) complexes that are displayed by antigen presenting cells (APC), a prerequisite for efficient T cell adaptive immunity against pathogens. Binding of alpha-beta TR to pMH complex initiates TR-CD3 clustering on the cell surface and intracellular activation of LCK that phosphorylates the ITAM motifs of CD3G, CD3D, CD3E and CD247 enabling the recruitment of ZAP70. In turn ZAP70 phosphorylates LAT, which recruits numerous signaling molecules to form the LAT signalosome. The LAT signalosome propagates signal branching to three major signaling pathways, the calcium, the mitogen-activated protein kinase (MAPK) kinase and the nuclear factor NF-kappa-B (NF-kB) pathways, leading to the mobilization of transcription factors that are critical for gene expression and essential for T cell growth and differentiation. The T cell repertoire is generated in the thymus, by V-(D)-J rearrangement. This repertoire is then shaped by intrathymic selection events to generate a peripheral T cell pool of self-MH restricted, non-autoaggressive T cells. Post-thymic interaction of alpha-beta TR with the pMH complexes shapes TR structural and functional avidity. This Homo sapiens (Human) protein is T cell receptor alpha variable 26-1.